We begin with the raw amino-acid sequence, 577 residues long: Endopolyphosphatase (577 aa).

Over 1–2 (MR) the chain is Cytoplasmic. A helical; Signal-anchor for type II membrane protein membrane pass occupies residues 3-23 (PSVITVAVLFVQSTWASFAFG). Over 24–577 (NPMSMRNKAH…YIGSISDFED (554 aa)) the chain is Vacuolar. 4 N-linked (GlcNAc...) asparagine glycosylation sites follow: Asn-363, Asn-370, Asn-375, and Asn-399. Residues 430 to 460 (SDYEIDKKKKKKKKNNKKKKKNKRKNIKPGP) are disordered. Positions 437-456 (KKKKKKKNNKKKKKNKRKNI) are enriched in basic residues. Asn-481 carries an N-linked (GlcNAc...) asparagine glycan.

It belongs to the endopolyphosphatase PPN1 family. It depends on a divalent metal cation as a cofactor. In terms of processing, processing by proteases in the vacuole may be required for activation.

The protein resides in the vacuole membrane. It carries out the reaction [phosphate](n+1) + n H2O = (n+1) phosphate + n H(+). Functionally, catalyzes the hydrolysis of inorganic polyphosphate (polyP) chains of many hundreds of phosphate residues into shorter lengths. The polypeptide is Endopolyphosphatase (ppn1) (Schizosaccharomyces pombe (strain 972 / ATCC 24843) (Fission yeast)).